The chain runs to 92 residues: Small ribosomal subunit protein uS19c (92 aa).

The protein belongs to the universal ribosomal protein uS19 family.

It is found in the plastid. The protein localises to the chloroplast. Functionally, protein S19 forms a complex with S13 that binds strongly to the 16S ribosomal RNA. This is Small ribosomal subunit protein uS19c from Tupiella akineta (Green alga).